Here is a 432-residue protein sequence, read N- to C-terminus: Sphingosine N-acyltransferase-like protein ALT7 (432 aa).

A helical membrane pass occupies residues 55–75; that stretch reads IGLSLGSLLLLILMFTCLPYY. A glycan (N-linked (GlcNAc...) asparagine) is linked at Asn-77. A run of 7 helical transmembrane segments spans residues 91-111, 128-148, 172-192, 226-246, 250-270, 273-293, and 338-358; these read FIFSGVVLFTALRAISMIYLL, FTEQGWLVIHHSLFWTTGMYI, GLTKGYYLLQLAFWLQQIVVV, VGNVILCLVDIVDVLFAFAKL, LGFQYACDVAFCVFLASWLVA, GLYLLVCWSIFTILPTVMPYG, and AFLGLLVGLQVLMLIWLGMIL. Residues 123–366 form the TLC domain; it reads KLMVRFTEQG…ILKVAYKVFQ (244 aa). The disordered stretch occupies residues 370 to 395; it reads ADDTRSDSEESGYGTSDHEGDCYGAQ.

It belongs to the sphingosine N-acyltransferase family.

The protein localises to the membrane. The protein operates within mycotoxin biosynthesis. Sphingosine N-acyltransferase-like protein; part of the gene cluster that mediates the biosynthesis of the host-selective toxins (HSTs) AAL-toxins, sphinganine-analog mycotoxins responsible for Alternaria stem canker on tomato by the tomato pathotype. The biosynthesis starts with the polyketide synthase ALT1-catalyzed C-16 carbon chain assembly from one starter acetyl-CoA unit with malonyl-CoA extender units. ALT1 also selectively transfers methyl groups at the first and the third cycle of chain elongation for AAL toxin. The C-16 polyketide chain is released from the enzyme by a nucleophilic attack of a carbanion, which is derived from R-carbon of glycin by decarboxylation, on the carbonyl carbon of polyketide acyl chain. This step is probably catalyzed by a pyridoxal 5'-phosphate-dependent aminoacyl transferase ALT4. The respective functions of the other enzymes encoded by the cluster have still to be elucidated. The sphingosine N-acyltransferase-like protein ALT7 seems not to act as a resistance/self-tolerance factor against the toxin in the toxin biosynthetic gene cluster, contrary to what is expected. The sequence is that of Sphingosine N-acyltransferase-like protein ALT7 from Alternaria alternata (Alternaria rot fungus).